The primary structure comprises 205 residues: Holliday junction branch migration complex subunit RuvA (205 aa).

The domain I stretch occupies residues 1-64 (MIGRLRGIVL…EDAQLLYGFN (64 aa)). Positions 65-143 (DKQERALFRE…GLNGDLFNQS (79 aa)) are domain II. The tract at residues 144–156 (SDINLPATAKQTT) is flexible linker. The interval 157-205 (SDADSEAEAAAALVSLGYKPQEASRMVSKIAKPGADCETLIREALRAVL) is domain III.

The protein belongs to the RuvA family. As to quaternary structure, homotetramer. Forms an RuvA(8)-RuvB(12)-Holliday junction (HJ) complex. HJ DNA is sandwiched between 2 RuvA tetramers; dsDNA enters through RuvA and exits via RuvB. An RuvB hexamer assembles on each DNA strand where it exits the tetramer. Each RuvB hexamer is contacted by two RuvA subunits (via domain III) on 2 adjacent RuvB subunits; this complex drives branch migration. In the full resolvosome a probable DNA-RuvA(4)-RuvB(12)-RuvC(2) complex forms which resolves the HJ.

It is found in the cytoplasm. Its function is as follows. The RuvA-RuvB-RuvC complex processes Holliday junction (HJ) DNA during genetic recombination and DNA repair, while the RuvA-RuvB complex plays an important role in the rescue of blocked DNA replication forks via replication fork reversal (RFR). RuvA specifically binds to HJ cruciform DNA, conferring on it an open structure. The RuvB hexamer acts as an ATP-dependent pump, pulling dsDNA into and through the RuvAB complex. HJ branch migration allows RuvC to scan DNA until it finds its consensus sequence, where it cleaves and resolves the cruciform DNA. This chain is Holliday junction branch migration complex subunit RuvA, found in Photorhabdus laumondii subsp. laumondii (strain DSM 15139 / CIP 105565 / TT01) (Photorhabdus luminescens subsp. laumondii).